The sequence spans 1116 residues: Ubiquitin C-terminal hydrolase 12 (1116 aa).

Positions M1–D10 are enriched in pro residues. A disordered region spans residues M1–P52. Positions Q36–N46 are enriched in polar residues. An MATH domain is found at T54 to V179. The USP domain occupies V199–E524. C208 serves as the catalytic Nucleophile. Catalysis depends on H455, which acts as the Proton acceptor.

The protein belongs to the peptidase C19 family. As to quaternary structure, interacts with SIC/RON3.

It carries out the reaction Thiol-dependent hydrolysis of ester, thioester, amide, peptide and isopeptide bonds formed by the C-terminal Gly of ubiquitin (a 76-residue protein attached to proteins as an intracellular targeting signal).. Its function is as follows. Recognizes and hydrolyzes the peptide bond at the C-terminal Gly of ubiquitin. Involved in the processing of poly-ubiquitin precursors as well as that of ubiquitinated proteins. Positive regulator of root meristem development that, together with UBP13, prevents the ubiquitination and turnover of RGFR1 induced by the RGF1 hormone peptide, thus influencing PLT1 and PLT2 expression. This Arabidopsis thaliana (Mouse-ear cress) protein is Ubiquitin C-terminal hydrolase 12.